The following is a 294-amino-acid chain: tRNA dimethylallyltransferase (294 aa).

ATP is bound at residue 11 to 18 (GPTAVGKT). 13 to 18 (TAVGKT) serves as a coordination point for substrate. The segment at 36–39 (DSQQ) is interaction with substrate tRNA.

The protein belongs to the IPP transferase family. Monomer. Requires Mg(2+) as cofactor.

It catalyses the reaction adenosine(37) in tRNA + dimethylallyl diphosphate = N(6)-dimethylallyladenosine(37) in tRNA + diphosphate. In terms of biological role, catalyzes the transfer of a dimethylallyl group onto the adenine at position 37 in tRNAs that read codons beginning with uridine, leading to the formation of N6-(dimethylallyl)adenosine (i(6)A). This is tRNA dimethylallyltransferase from Lactococcus lactis subsp. cremoris (strain MG1363).